Reading from the N-terminus, the 411-residue chain is 1-deoxy-D-xylulose 5-phosphate reductoisomerase (411 aa).

T12, G13, S14, I15, and N127 together coordinate NADPH. Residue K128 coordinates 1-deoxy-D-xylulose 5-phosphate. E129 is a binding site for NADPH. Residue D153 coordinates Mn(2+). The 1-deoxy-D-xylulose 5-phosphate site is built by S154, E155, S189, and H212. E155 contributes to the Mn(2+) binding site. G218 lines the NADPH pocket. 1-deoxy-D-xylulose 5-phosphate contacts are provided by S225, N230, K231, and E234. E234 is a Mn(2+) binding site.

This sequence belongs to the DXR family. The cofactor is Mg(2+). Mn(2+) serves as cofactor.

The enzyme catalyses 2-C-methyl-D-erythritol 4-phosphate + NADP(+) = 1-deoxy-D-xylulose 5-phosphate + NADPH + H(+). Its pathway is isoprenoid biosynthesis; isopentenyl diphosphate biosynthesis via DXP pathway; isopentenyl diphosphate from 1-deoxy-D-xylulose 5-phosphate: step 1/6. Its function is as follows. Catalyzes the NADPH-dependent rearrangement and reduction of 1-deoxy-D-xylulose-5-phosphate (DXP) to 2-C-methyl-D-erythritol 4-phosphate (MEP). The polypeptide is 1-deoxy-D-xylulose 5-phosphate reductoisomerase (Colwellia psychrerythraea (strain 34H / ATCC BAA-681) (Vibrio psychroerythus)).